Reading from the N-terminus, the 409-residue chain is Regulator of Ty1 transposition protein 103 (409 aa).

The 135-residue stretch at M1–S135 folds into the CID domain. The tract at residues L250 to N409 is disordered. Residues G266–N289 show a composition bias toward acidic residues. 3 stretches are compositionally biased toward basic and acidic residues: residues T307–N323, R337–E363, and E370–G380.

The protein belongs to the UPF0400 (RTT103) family. In terms of assembly, interacts with PCF11, RAI1, RAT1, RPO21 and RBP2.

It is found in the nucleus. In terms of biological role, involved in transcription termination by RNA polymerase II and in regulation of Ty1 transposition. This chain is Regulator of Ty1 transposition protein 103 (RTT103), found in Saccharomyces cerevisiae (strain ATCC 204508 / S288c) (Baker's yeast).